The following is a 155-amino-acid chain: Deoxyuridine 5'-triphosphate nucleotidohydrolase (155 aa).

Substrate contacts are provided by residues 74–76 (RSG), Asn-87, and 91–93 (LID).

This sequence belongs to the dUTPase family. Mg(2+) is required as a cofactor.

The catalysed reaction is dUTP + H2O = dUMP + diphosphate + H(+). It participates in pyrimidine metabolism; dUMP biosynthesis; dUMP from dCTP (dUTP route): step 2/2. In terms of biological role, this enzyme is involved in nucleotide metabolism: it produces dUMP, the immediate precursor of thymidine nucleotides and it decreases the intracellular concentration of dUTP so that uracil cannot be incorporated into DNA. The chain is Deoxyuridine 5'-triphosphate nucleotidohydrolase from Xanthomonas axonopodis pv. citri (strain 306).